A 396-amino-acid polypeptide reads, in one-letter code: L-lactate dehydrogenase (396 aa).

Positions 1–380 constitute an FMN hydroxy acid dehydrogenase domain; it reads MIISAASDYR…TQDSLVQGLG (380 aa). Tyr-24 lines the substrate pocket. Positions 106 and 127 each coordinate FMN. Tyr-129 provides a ligand contact to substrate. Thr-155 lines the FMN pocket. Arg-164 is a binding site for substrate. Lys-251 contacts FMN. His-275 functions as the Proton acceptor in the catalytic mechanism. Arg-278 is a substrate binding site. Residue 306 to 330 coordinates FMN; the sequence is DSGIRNGLDVVRMIALGADTVLLGR.

Belongs to the FMN-dependent alpha-hydroxy acid dehydrogenase family. Requires FMN as cofactor.

It localises to the cell inner membrane. It catalyses the reaction (S)-lactate + A = pyruvate + AH2. In terms of biological role, catalyzes the conversion of L-lactate to pyruvate. Is coupled to the respiratory chain. This is L-lactate dehydrogenase from Escherichia coli O7:K1 (strain IAI39 / ExPEC).